The following is a 403-amino-acid chain: Probable tubulin--tyrosine ligase C12B10.04 (403 aa).

Positions 9–386 (KVYVNYRDEY…PFFESSTKRN (378 aa)) constitute a TTL domain.

It belongs to the tubulin--tyrosine ligase family. Requires Mg(2+) as cofactor. K(+) serves as cofactor.

The protein localises to the cytoplasm. The protein resides in the nucleus. It carries out the reaction C-terminal L-alpha-aminoacyl-L-glutamyl-L-glutamyl-[tubulin] + L-tyrosine + ATP = C-terminal L-alpha-aminoacyl-L-glutamyl-L-glutamyl-L-tyrosyl-[tubulin] + ADP + phosphate + H(+). Its function is as follows. Probable tubulin--tyrosine ligase. In Schizosaccharomyces pombe (strain 972 / ATCC 24843) (Fission yeast), this protein is Probable tubulin--tyrosine ligase C12B10.04.